A 272-amino-acid chain; its full sequence is Streptomycin 3''-kinase (272 aa).

The active-site Proton acceptor is the D190.

It belongs to the aminoglycoside phosphotransferase family.

The catalysed reaction is streptomycin + ATP = streptomycin 3''-phosphate + ADP + H(+). The aminoglycoside phosphotransferases achieve inactivation of their antibiotic substrates by phosphorylation. This is Streptomycin 3''-kinase (aphE) from Streptomyces griseus.